We begin with the raw amino-acid sequence, 183 residues long: Probable GTP-binding protein EngB (183 aa).

The region spanning 18 to 183 (DQNEIVFWGR…LSDLVEHFEL (166 aa)) is the EngB-type G domain. GTP-binding positions include 26 to 33 (GRSNVGKS), 52 to 56 (GRTRL), 70 to 73 (DLPG), 137 to 140 (TKID), and 166 to 168 (VSS). Mg(2+) is bound by residues S33 and T54.

Belongs to the TRAFAC class TrmE-Era-EngA-EngB-Septin-like GTPase superfamily. EngB GTPase family. Mg(2+) serves as cofactor.

Necessary for normal cell division and for the maintenance of normal septation. The polypeptide is Probable GTP-binding protein EngB (Metamycoplasma arthritidis (strain 158L3-1) (Mycoplasma arthritidis)).